The primary structure comprises 373 residues: Queuine tRNA-ribosyltransferase (373 aa).

The Proton acceptor role is filled by Asp89. Residues 89 to 93, Asp143, Gln185, and Gly212 each bind substrate; that span reads DSGGF. Residues 243-249 are RNA binding; the sequence is GVGRPED. Asp262 serves as the catalytic Nucleophile. Residues 267–271 are RNA binding; important for wobble base 34 recognition; the sequence is TRNAR. Zn(2+) contacts are provided by Cys300, Cys302, Cys305, and His331.

This sequence belongs to the queuine tRNA-ribosyltransferase family. In terms of assembly, homodimer. Within each dimer, one monomer is responsible for RNA recognition and catalysis, while the other monomer binds to the replacement base PreQ1. Zn(2+) serves as cofactor.

The enzyme catalyses 7-aminomethyl-7-carbaguanine + guanosine(34) in tRNA = 7-aminomethyl-7-carbaguanosine(34) in tRNA + guanine. It functions in the pathway tRNA modification; tRNA-queuosine biosynthesis. Its function is as follows. Catalyzes the base-exchange of a guanine (G) residue with the queuine precursor 7-aminomethyl-7-deazaguanine (PreQ1) at position 34 (anticodon wobble position) in tRNAs with GU(N) anticodons (tRNA-Asp, -Asn, -His and -Tyr). Catalysis occurs through a double-displacement mechanism. The nucleophile active site attacks the C1' of nucleotide 34 to detach the guanine base from the RNA, forming a covalent enzyme-RNA intermediate. The proton acceptor active site deprotonates the incoming PreQ1, allowing a nucleophilic attack on the C1' of the ribose to form the product. After dissociation, two additional enzymatic reactions on the tRNA convert PreQ1 to queuine (Q), resulting in the hypermodified nucleoside queuosine (7-(((4,5-cis-dihydroxy-2-cyclopenten-1-yl)amino)methyl)-7-deazaguanosine). This is Queuine tRNA-ribosyltransferase from Marinobacter nauticus (strain ATCC 700491 / DSM 11845 / VT8) (Marinobacter aquaeolei).